Reading from the N-terminus, the 265-residue chain is MICOS complex subunit Mic27 (265 aa).

The transit peptide at 1–27 directs the protein to the mitochondrion; the sequence is MAAFRMGKLTTIPAGLIYASINVRLAK. The Mitochondrial intermembrane segment spans residues 28 to 110; sequence EEEPKKQLVR…YVYLKNPPQD (83 aa). The helical transmembrane segment at 111–129 threads the bilayer; it reads FLPKMGVITASGLAGLLSA. The Mitochondrial matrix portion of the chain corresponds to 130-137; that stretch reads RKGSRFKK. Residues 138 to 155 form a helical membrane-spanning segment; the sequence is IAYPLGLATLGATVCYPA. The Mitochondrial intermembrane portion of the chain corresponds to 156-265; sequence QSVIIAKITG…DDKDMYSTRS (110 aa). Disordered stretches follow at residues 187–215 and 229–265; these read SENESLPEPKEESKEGRSDEIHASLPDLK and VIKSESTSGTTQFIPDPKLMDHGQSHPDDKDMYSTRS. Phosphoserine is present on Ser204. Positions 229–241 are enriched in polar residues; that stretch reads VIKSESTSGTTQF. The segment covering 246-265 has biased composition (basic and acidic residues); sequence KLMDHGQSHPDDKDMYSTRS.

The protein belongs to the apolipoprotein O/MICOS complex subunit Mic27 family. As to quaternary structure, component of the mitochondrial contact site and cristae organizing system (MICOS) complex, composed of at least MICOS10/MIC10, CHCHD3/MIC19, CHCHD6/MIC25, APOOL/MIC27, IMMT/MIC60, APOO/MIC23/MIC26 and MICOS13/MIC13. This complex was also known under the names MINOS or MitOS complex. The MICOS complex associates with mitochondrial outer membrane proteins SAMM50, MTX1 and MTX2 (together described as components of the mitochondrial outer membrane sorting assembly machinery (SAM) complex) and DNAJC11, mitochondrial inner membrane protein TMEM11 and with HSPA9. The MICOS and SAM complexes together with DNAJC11 are part of a large protein complex spanning both membranes termed the mitochondrial intermembrane space bridging (MIB) complex. Interacts with MICOS10/MIC10, IMMT/MIC60 and APOO/MIC23/MIC26.

The protein localises to the mitochondrion inner membrane. It is found in the mitochondrion. In terms of biological role, component of the MICOS complex, a large protein complex of the mitochondrial inner membrane that plays crucial roles in the maintenance of crista junctions, inner membrane architecture, and formation of contact sites to the outer membrane. Specifically binds to cardiolipin (in vitro) but not to the precursor lipid phosphatidylglycerol. Plays a crucial role in crista junction formation and mitochondrial function. The chain is MICOS complex subunit Mic27 (Apool) from Mus musculus (Mouse).